Here is a 372-residue protein sequence, read N- to C-terminus: Envelope phospholipase OPG057 (372 aa).

The YPPL signature appears at 153-156 (YPPL). S-palmitoyl cysteine; by host attachment occurs at residues C185 and C186. A PLD phosphodiesterase domain is found at 307–334 (FTIQNNTKLLIVDDEYVHITSANFDGTH).

It belongs to the orthopoxvirus OPG057 family. Interacts with protein OPG190/B5. Post-translationally, palmitoylated. Attachment of the palmitate moiety is essential for correct intracellular targeting and protein function.

Its subcellular location is the virion membrane. It is found in the host Golgi apparatus. It localises to the host trans-Golgi network. The protein resides in the host endoplasmic reticulum membrane. The enzyme catalyses a 1,2-diacyl-sn-glycero-3-phosphocholine + H2O = a 1,2-diacyl-sn-glycero-3-phosphate + choline + H(+). In terms of biological role, major envelope protein that plays a role in the biogenesis of the viral double membrane and in egress of virus from the host cell. Produces the wrapped form of virus that is required for cell-to-cell spread. Acts as a lipase with broad specificity including phospholipase C, phospholipase A, and triacylglycerol lipase activities. In Vaccinia virus (strain Western Reserve) (VACV), this protein is Envelope phospholipase OPG057 (OPG057).